Here is a 212-residue protein sequence, read N- to C-terminus: ATP phosphoribosyltransferase (212 aa).

It belongs to the ATP phosphoribosyltransferase family. Short subfamily. In terms of assembly, heteromultimer composed of HisG and HisZ subunits.

The protein localises to the cytoplasm. The enzyme catalyses 1-(5-phospho-beta-D-ribosyl)-ATP + diphosphate = 5-phospho-alpha-D-ribose 1-diphosphate + ATP. It functions in the pathway amino-acid biosynthesis; L-histidine biosynthesis; L-histidine from 5-phospho-alpha-D-ribose 1-diphosphate: step 1/9. In terms of biological role, catalyzes the condensation of ATP and 5-phosphoribose 1-diphosphate to form N'-(5'-phosphoribosyl)-ATP (PR-ATP). Has a crucial role in the pathway because the rate of histidine biosynthesis seems to be controlled primarily by regulation of HisG enzymatic activity. The polypeptide is ATP phosphoribosyltransferase (Prochlorococcus marinus (strain MIT 9312)).